A 393-amino-acid polypeptide reads, in one-letter code: NAD(P)H-quinone oxidoreductase subunit H, chloroplastic (393 aa).

This sequence belongs to the complex I 49 kDa subunit family. In terms of assembly, NDH is composed of at least 16 different subunits, 5 of which are encoded in the nucleus.

Its subcellular location is the plastid. It is found in the chloroplast thylakoid membrane. It carries out the reaction a plastoquinone + NADH + (n+1) H(+)(in) = a plastoquinol + NAD(+) + n H(+)(out). The catalysed reaction is a plastoquinone + NADPH + (n+1) H(+)(in) = a plastoquinol + NADP(+) + n H(+)(out). In terms of biological role, NDH shuttles electrons from NAD(P)H:plastoquinone, via FMN and iron-sulfur (Fe-S) centers, to quinones in the photosynthetic chain and possibly in a chloroplast respiratory chain. The immediate electron acceptor for the enzyme in this species is believed to be plastoquinone. Couples the redox reaction to proton translocation, and thus conserves the redox energy in a proton gradient. The chain is NAD(P)H-quinone oxidoreductase subunit H, chloroplastic from Manihot esculenta (Cassava).